The following is a 219-amino-acid chain: Dephospho-CoA kinase (219 aa).

One can recognise a DPCK domain in the interval 8–215 (LVGVTGGIGS…EAAASGPDCQ (208 aa)). Position 16 to 21 (16 to 21 (GSGKST)) interacts with ATP.

This sequence belongs to the CoaE family.

It is found in the cytoplasm. The enzyme catalyses 3'-dephospho-CoA + ATP = ADP + CoA + H(+). The protein operates within cofactor biosynthesis; coenzyme A biosynthesis; CoA from (R)-pantothenate: step 5/5. In terms of biological role, catalyzes the phosphorylation of the 3'-hydroxyl group of dephosphocoenzyme A to form coenzyme A. The protein is Dephospho-CoA kinase of Chlorobium luteolum (strain DSM 273 / BCRC 81028 / 2530) (Pelodictyon luteolum).